The sequence spans 206 residues: Thymidylate kinase (206 aa).

10–17 (GIDGAGKS) contributes to the ATP binding site.

It belongs to the thymidylate kinase family.

It catalyses the reaction dTMP + ATP = dTDP + ADP. Functionally, phosphorylation of dTMP to form dTDP in both de novo and salvage pathways of dTTP synthesis. The polypeptide is Thymidylate kinase (tmk) (Neisseria meningitidis serogroup A / serotype 4A (strain DSM 15465 / Z2491)).